The primary structure comprises 830 residues: Frameshifted structural polyprotein (830 aa).

The segment at 58–109 (AIAPARPPKPKKKKTTKPKPKTQPKKINGKTQQQKKKDKQADKKKKKPGKRE) is disordered. The span at 65–107 (PKPKKKKTTKPKPKTQPKKINGKTQQQKKKDKQADKKKKKPGK) shows a compositional bias: basic residues. Residues 94-106 (KDKQADKKKKKPG) are ribosome-binding. Cys119 and Cys134 are disulfide-bonded. Positions 119–267 (CIFEVKHEGK…RVTPEGSEEW (149 aa)) constitute a Peptidase S3 domain. Active-site charge relay system residues include His145, Asp167, and Ser219. Residues Asn280, Asn327, Asn533, and Asn595 are each glycosylated (N-linked (GlcNAc...) asparagine; by host). The chain crosses the membrane as a helical span at residues 702–722 (AVVGMSLLALISIFASCYMLV). 4 S-palmitoyl cysteine; by host lipidation sites follow: Cys718, Cys728, Cys748, and Cys749. A transient transmembrane before p62-6K protein processing region spans residues 728–748 (CLTPYALTPGAAVPWTLGILC). 2 helical membrane passes run 771–791 (ALFWLEFAAPVACILIITYCL) and 793–813 (NVLCCCKSLSFLSATEPRGHR).

In terms of assembly, homodimer. Homomultimer. Interacts with host karyopherin KPNA4; this interaction allows the nuclear import of the viral capsid protein. Precursor of protein E3/E2: The precursor of protein E3/E2 and E1 form a heterodimer shortly after synthesis. Interacts with host IRAK1; the interaction leads to inhibition of IRAK1-dependent signaling. As to quaternary structure, processing of the precursor of protein E3/E2 into E2 and E3 results in a heterodimer of the spike glycoproteins E2 and E1. Spike at virion surface are constituted of three E2-E1 heterodimers. Interacts with 6K protein. Interacts with host MXRA8; this interaction mediates virus entry. In terms of processing, specific enzymatic cleavages in vivo yield mature proteins. Capsid protein is auto-cleaved during polyprotein translation, unmasking a signal peptide at the N-terminus of the precursor of E3/E2. The remaining polyprotein is then targeted to the host endoplasmic reticulum, where host signal peptidase cleaves it into pE2 and TF. pE2 is further processed to mature E3 and E2 by host furin in trans-Golgi vesicle.

The protein resides in the virion. It is found in the host cytoplasm. It localises to the host cell membrane. The protein localises to the host nucleus. Its subcellular location is the virion membrane. It catalyses the reaction Autocatalytic release of the core protein from the N-terminus of the togavirus structural polyprotein by hydrolysis of a -Trp-|-Ser- bond.. Its function is as follows. Forms an icosahedral capsid with a T=4 symmetry composed of 240 copies of the capsid protein surrounded by a lipid membrane through which penetrate 80 spikes composed of trimers of E1-E2 heterodimers. The capsid protein binds to the viral RNA genome at a site adjacent to a ribosome binding site for viral genome translation following genome release. Possesses a protease activity that results in its autocatalytic cleavage from the nascent structural protein. Following its self-cleavage, the capsid protein transiently associates with ribosomes, and within several minutes the protein binds to viral RNA and rapidly assembles into icosahedric core particles. The resulting nucleocapsid eventually associates with the cytoplasmic domain of the spike glycoprotein E2 at the cell membrane, leading to budding and formation of mature virions. In case of infection, new virions attach to target cells and after clathrin-mediated endocytosis their membrane fuses with the host endosomal membrane. This leads to the release of the nucleocapsid into the cytoplasm, followed by an uncoating event necessary for the genomic RNA to become accessible. The uncoating might be triggered by the interaction of capsid proteins with ribosomes. Binding of ribosomes would release the genomic RNA since the same region is genomic RNA-binding and ribosome-binding. Specifically inhibits interleukin-1 receptor-associated kinase 1/IRAK1-dependent signaling during viral entry, representing a means by which the alphaviruses may evade innate immune detection and activation prior to viral gene expression. Functionally, provides the signal sequence for p62 (E3/E2) translocation to the host endoplasmic reticulum. Mediates pH protection of E1 during secretory pathway trans- port. Plays a role in viral attachment to target host cell, by binding to the cell receptor. Synthesized as a p62 precursor which is processed by furin at the cell membrane just before virion budding, giving rise to E2-E1 heterodimer. The p62-E1 heterodimer is stable, whereas E2-E1 is unstable and dissociate at low pH. p62 is processed at the last step, presumably to avoid E1 fusion activation before its final export to cell surface. E2 C-terminus contains a transitory transmembrane that would be disrupted by palmitoylation, resulting in reorientation of the C-terminal tail from lumenal to cytoplasmic side. This step is critical since E2 C-terminus is involved in budding by interacting with capsid proteins. This release of E2 C-terminus in cytoplasm occurs lately in protein export, and precludes premature assembly of particles at the endoplasmic reticulum membrane. In terms of biological role, virion component that may play a role during viral assembly. The chain is Frameshifted structural polyprotein from Aedes (Middle-African hedgehog).